Consider the following 466-residue polypeptide: 3-isopropylmalate dehydratase large subunit (466 aa).

[4Fe-4S] cluster contacts are provided by cysteine 349, cysteine 410, and cysteine 413.

It belongs to the aconitase/IPM isomerase family. LeuC type 1 subfamily. Heterodimer of LeuC and LeuD. The cofactor is [4Fe-4S] cluster.

The catalysed reaction is (2R,3S)-3-isopropylmalate = (2S)-2-isopropylmalate. It functions in the pathway amino-acid biosynthesis; L-leucine biosynthesis; L-leucine from 3-methyl-2-oxobutanoate: step 2/4. In terms of biological role, catalyzes the isomerization between 2-isopropylmalate and 3-isopropylmalate, via the formation of 2-isopropylmaleate. The protein is 3-isopropylmalate dehydratase large subunit of Vesicomyosocius okutanii subsp. Calyptogena okutanii (strain HA).